Reading from the N-terminus, the 358-residue chain is Myb family transcription factor APL (358 aa).

The 61-residue stretch at 31–91 (TDPKPRLRWT…HLQKFRLGKQ (61 aa)) folds into the HTH myb-type domain. The H-T-H motif DNA-binding region spans 62–87 (PKTIMRVMGVKGLTLYHLKSHLQKFR). Residues 125–145 (RNMNEMQMEVQRRLHEQLEVQ) adopt a coiled-coil conformation. The short motif at 138 to 143 (LHEQLE) is the LHEQLE element. The segment at 313-358 (RKSGLSGDEGNNGGKLLERPSPRRSPLSPMMNPNGGLIQGRNSPFG) is disordered.

This sequence belongs to the MYB-CC family. As to expression, expressed in shoots and roots, specifically in the developing protophloem sieve elements. Detected in phloem and/or cambium. Expressed in the phloem tissues of various organs, including leaves and cotyledons, during vegetative growth.

The protein localises to the nucleus. Transcription factor required for phloem identity. Has a dual role both in promoting phloem differentiation and in repressing xylem differentiation during vascular development. Regulates the expression of the transcription factor NAC045 (AC A4VCM0). May activate the transcription of specific genes involved in phosphate uptake or assimilation. Promotes flowering through transcriptional activation of both FT and its transport machinery component, FTIP1. The sequence is that of Myb family transcription factor APL from Arabidopsis thaliana (Mouse-ear cress).